Here is a 296-residue protein sequence, read N- to C-terminus: 4-hydroxy-tetrahydrodipicolinate synthase (296 aa).

T49 provides a ligand contact to pyruvate. The Proton donor/acceptor role is filled by Y137. The Schiff-base intermediate with substrate role is filled by K166. V208 provides a ligand contact to pyruvate.

The protein belongs to the DapA family. As to quaternary structure, homotetramer; dimer of dimers.

The protein localises to the cytoplasm. The enzyme catalyses L-aspartate 4-semialdehyde + pyruvate = (2S,4S)-4-hydroxy-2,3,4,5-tetrahydrodipicolinate + H2O + H(+). The protein operates within amino-acid biosynthesis; L-lysine biosynthesis via DAP pathway; (S)-tetrahydrodipicolinate from L-aspartate: step 3/4. In terms of biological role, catalyzes the condensation of (S)-aspartate-beta-semialdehyde [(S)-ASA] and pyruvate to 4-hydroxy-tetrahydrodipicolinate (HTPA). This chain is 4-hydroxy-tetrahydrodipicolinate synthase, found in Desulforamulus reducens (strain ATCC BAA-1160 / DSM 100696 / MI-1) (Desulfotomaculum reducens).